Here is a 274-residue protein sequence, read N- to C-terminus: Nitrogenase iron protein (274 aa).

Residue 8 to 15 (GKGGIGKS) coordinates ATP. C94 is a [4Fe-4S] cluster binding site. R97 carries the post-translational modification ADP-ribosylarginine; by dinitrogenase reductase ADP-ribosyltransferase. C131 is a binding site for [4Fe-4S] cluster.

It belongs to the NifH/BchL/ChlL family. In terms of assembly, homodimer. [4Fe-4S] cluster serves as cofactor. Post-translationally, the reversible ADP-ribosylation of Arg-97 inactivates the nitrogenase reductase and regulates nitrogenase activity.

It catalyses the reaction N2 + 8 reduced [2Fe-2S]-[ferredoxin] + 16 ATP + 16 H2O = H2 + 8 oxidized [2Fe-2S]-[ferredoxin] + 2 NH4(+) + 16 ADP + 16 phosphate + 6 H(+). In terms of biological role, the key enzymatic reactions in nitrogen fixation are catalyzed by the nitrogenase complex, which has 2 components: the iron protein and the molybdenum-iron protein. This chain is Nitrogenase iron protein, found in Chlorobium phaeobacteroides (strain BS1).